We begin with the raw amino-acid sequence, 684 residues long: Methionine--tRNA ligase (684 aa).

The 'HIGH' region motif lies at 12 to 22 (PYANGSIHLGH). Residues C143, C146, C156, and C159 each coordinate Zn(2+). The 'KMSKS' region motif lies at 339–343 (KMSKS). K342 serves as a coordination point for ATP. The region spanning 581–684 (DFMKIDMRVA…AGAQPGDKVG (104 aa)) is the tRNA-binding domain.

The protein belongs to the class-I aminoacyl-tRNA synthetase family. MetG type 1 subfamily. In terms of assembly, homodimer. It depends on Zn(2+) as a cofactor.

The protein localises to the cytoplasm. It carries out the reaction tRNA(Met) + L-methionine + ATP = L-methionyl-tRNA(Met) + AMP + diphosphate. Its function is as follows. Is required not only for elongation of protein synthesis but also for the initiation of all mRNA translation through initiator tRNA(fMet) aminoacylation. This chain is Methionine--tRNA ligase, found in Neisseria gonorrhoeae (strain ATCC 700825 / FA 1090).